Reading from the N-terminus, the 687-residue chain is Protein-glutamine gamma-glutamyltransferase 2 (687 aa).

A2 is subject to N-acetylalanine. Intrachain disulfides connect C230–C370 and C370–C371. Active-site residues include C277, H335, and D358. Ca(2+) contacts are provided by N398, D400, E437, E447, and E452. The residue at position 468 (K468) is an N6-acetyllysine. Residue 476-483 (RIRVGEGM) coordinates GTP. Position 539 (E539) interacts with Ca(2+). 580–583 (RDIY) is a GTP binding site. Residue Q633 forms an Isoglutamyl lysine isopeptide (Gln-Lys) (interchain with K-?) linkage.

The protein belongs to the transglutaminase superfamily. Transglutaminase family. As to quaternary structure, monomer. Interacts with phospholipase C; promoting alpha-1 adrenergic receptor signaling. Interacts with PLCD1. Ca(2+) is required as a cofactor. Disulfide bond formation inactivates the calcium-dependent acyltransferase activity. Cys-370 can form disulfide bonds with both Cys-230 and Cys-371: formation of a disulfide bond between Cys-230 and Cys-370 facilitates formation of the disulfide between Cys-370 and Cys-371, which promotes inactivation of the acyltransferase activity. May also form interchain disulfids between Cys-230 and Cys-370. Ca(2+) protects against disulfide bond formation and inactivation. Post-translationally, auto-transglutaminated: Forms covalent cross-links mediated by transglutaminase between Gln-633 and the epsilon-amino group of a lysine residue of itself or HMGB1, forming homopolymers and heteropolymers, respectively. In terms of processing, S-nitrosylated, leading to inactivation of the acyltransferase activity. In terms of tissue distribution, highest levels are detected in the lung. Lower levels are found in the liver, spleen and heart, but not in the brain.

It is found in the cytoplasm. It localises to the cytosol. The protein resides in the nucleus. The protein localises to the chromosome. Its subcellular location is the secreted. It is found in the extracellular space. It localises to the extracellular matrix. The protein resides in the cell membrane. The protein localises to the mitochondrion. The enzyme catalyses L-glutaminyl-[protein] + L-lysyl-[protein] = [protein]-L-lysyl-N(6)-5-L-glutamyl-[protein] + NH4(+). The catalysed reaction is L-glutaminyl-[protein] + serotonin = 5-serotonyl-L-glutamyl-[protein] + NH4(+). It carries out the reaction L-glutaminyl-[protein] + dopamine = 5-dopaminyl-L-glutamyl-[protein] + NH4(+). It catalyses the reaction L-glutaminyl-[protein] + histamine = 5-histaminyl-L-glutamyl-[protein] + NH4(+). The enzyme catalyses L-glutaminyl-[protein] + (R)-noradrenaline = 5-(R)-noradrenalinyl-L-glutamyl-[protein] + NH4(+). The catalysed reaction is L-glutaminyl-[protein] + H2O = L-glutamyl-[protein] + NH4(+). Acyltransferase activity is regulated by the binding of GTP and Ca(2+): inactivated by GTP, which stabilizes its closed structure, thereby obstructing the accessibility of substrates to the active sites. In contrast, Ca(2+) acts as a cofactor by inducing conformational change to the active open form. In absence of Ca(2+), Mg(2+) may bind Ca(2+)-binding sites, promoting GTP-binding and subsequent inhibition of the acyltransferase activity. Extracellularly reduced and activated by CLIC3. Calcium-dependent acyltransferase that catalyzes the formation of covalent bonds between peptide-bound glutamine and various primary amines, such as gamma-amino group of peptide-bound lysine, or mono- and polyamines, thereby producing cross-linked or aminated proteins, respectively. Involved in many biological processes, such as bone development, angiogenesis, wound healing, cellular differentiation, chromatin modification and apoptosis. Acts as a protein-glutamine gamma-glutamyltransferase by mediating the cross-linking of proteins, such as ACO2, HSPB6, FN1, HMGB1, RAP1GDS1, SLC25A4/ANT1, SPP1 and WDR54. Under physiological conditions, the protein cross-linking activity is inhibited by GTP; inhibition is relieved by Ca(2+) in response to various stresses. When secreted, catalyzes cross-linking of proteins of the extracellular matrix, such as FN1 and SPP1 resulting in the formation of scaffolds. Plays a key role during apoptosis, both by (1) promoting the cross-linking of cytoskeletal proteins resulting in condensation of the cytoplasm, and by (2) mediating cross-linking proteins of the extracellular matrix, resulting in the irreversible formation of scaffolds that stabilize the integrity of the dying cells before their clearance by phagocytosis, thereby preventing the leakage of harmful intracellular components. In addition to protein cross-linking, can use different monoamine substrates to catalyze a vast array of protein post-translational modifications: mediates aminylation of serotonin, dopamine, noradrenaline or histamine into glutamine residues of target proteins to generate protein serotonylation, dopaminylation, noradrenalinylation or histaminylation, respectively. Mediates protein serotonylation of small GTPases during activation and aggregation of platelets, leading to constitutive activation of these GTPases. Plays a key role in chromatin organization by mediating serotonylation and dopaminylation of histone H3. Catalyzes serotonylation of 'Gln-5' of histone H3 (H3Q5ser) during serotonergic neuron differentiation, thereby facilitating transcription. Acts as a mediator of neurotransmission-independent role of nuclear dopamine in ventral tegmental area (VTA) neurons: catalyzes dopaminylation of 'Gln-5' of histone H3 (H3Q5dop), thereby regulating relapse-related transcriptional plasticity in the reward system. Regulates vein remodeling by mediating serotonylation and subsequent inactivation of ATP2A2/SERCA2. Also acts as a protein deamidase by mediating the side chain deamidation of specific glutamine residues of proteins to glutamate. Catalyzes specific deamidation of protein gliadin, a component of wheat gluten in the diet. May also act as an isopeptidase cleaving the previously formed cross-links. Also able to participate in signaling pathways independently of its acyltransferase activity: acts as a signal transducer in alpha-1 adrenergic receptor-mediated stimulation of phospholipase C-delta (PLCD) activity and is required for coupling alpha-1 adrenergic agonists to the stimulation of phosphoinositide lipid metabolism. This is Protein-glutamine gamma-glutamyltransferase 2 from Bos taurus (Bovine).